We begin with the raw amino-acid sequence, 486 residues long: Betaine aldehyde dehydrogenase (486 aa).

The K(+) site is built by Thr-23 and Asp-90. 147–149 (GAW) serves as a coordination point for NAD(+). Lys-159 serves as the catalytic Charge relay system. Residues 173–176 (KPSE) and 226–229 (ESGT) contribute to the NAD(+) site. Leu-241 contacts K(+). Glu-247 serves as the catalytic Proton acceptor. NAD(+)-binding residues include Gly-249, Cys-281, and Glu-382. The Nucleophile role is filled by Cys-281. Cys-281 is subject to Cysteine sulfenic acid (-SOH). K(+) is bound by residues Lys-452 and Gly-455. Glu-459 (charge relay system) is an active-site residue.

Belongs to the aldehyde dehydrogenase family. Dimer of dimers. Requires K(+) as cofactor.

The enzyme catalyses betaine aldehyde + NAD(+) + H2O = glycine betaine + NADH + 2 H(+). The protein operates within amine and polyamine biosynthesis; betaine biosynthesis via choline pathway; betaine from betaine aldehyde: step 1/1. Its function is as follows. Involved in the biosynthesis of the osmoprotectant glycine betaine. Catalyzes the irreversible oxidation of betaine aldehyde to the corresponding acid. This Vibrio parahaemolyticus serotype O3:K6 (strain RIMD 2210633) protein is Betaine aldehyde dehydrogenase.